The chain runs to 559 residues: MRKFAYCKVVLATSLVWVLLDMFLLLYFSECNKCEEKKERGLPAGDVLELVQKPHEGPGEMGKPVVIPKEDQEKMKEMFKINQFNLMASEMIAFNRSLPDVRLEGCKTKVYPDSLPTTSVVIVFHNEAWSTLLRTVHSVINRSPRHMIEEIVLVDDASERDFLKRPLESYVKKLKVPVHVIRMEQRSGLIRARLKGAAVSKGQVITFLDAHCECTVGWLEPLLARIKHDRRTVVCPIIDVISDDTFEYMAGSDMTYGGFNWKLNFRWYPVPQREMDRRKGDRTLPVRTPTMAGGLFSIDRDYFQEIGTYDAGMDIWGGENLEISFRIWQCGGTLEIVTCSHVGHVFRKATPYTFPGGTGQIINKNNRRLAEVWMDEFKNFFYIISPGVTKVDYGDISSRVGLRHKLQCKPFSWYLENIYPDSQIPRHYFSLGEIRNVETNQCLDNMARKENEKVGIFNCHGMGGNQVFSYTANKEIRTDDLCLDVSKLNGPVTMLKCHHLKGNQLWEYDPVKLTLQHVNSNQCLDKATEEDSQVPSIRDCTGSRSQQWLLRNVTLPEIF.

The Cytoplasmic segment spans residues 1–8; it reads MRKFAYCK. The helical; Signal-anchor for type II membrane protein transmembrane segment at 9–28 threads the bilayer; it reads VVLATSLVWVLLDMFLLLYF. Residues 29-559 lie on the Lumenal side of the membrane; that stretch reads SECNKCEEKK…LRNVTLPEIF (531 aa). Asn95 carries an N-linked (GlcNAc...) asparagine glycan. Disulfide bonds link Cys106-Cys339, Cys330-Cys408, Cys442-Cys459, Cys482-Cys497, and Cys523-Cys540. Residues 115–225 are catalytic subdomain A; the sequence is LPTTSVVIVF…VGWLEPLLAR (111 aa). Substrate-binding residues include Asp156 and Arg186. Asp209 and His211 together coordinate Mn(2+). The interval 285–347 is catalytic subdomain B; it reads PVRTPTMAGG…TCSHVGHVFR (63 aa). Trp316 is a substrate binding site. His344 contacts Mn(2+). Residues Arg347 and Tyr352 each coordinate substrate. The Ricin B-type lectin domain maps to 429-551; sequence FSLGEIRNVE…GSRSQQWLLR (123 aa). A glycan (N-linked (GlcNAc...) asparagine) is linked at Asn552.

The protein belongs to the glycosyltransferase 2 family. GalNAc-T subfamily. It depends on Mn(2+) as a cofactor. As to expression, heart, brain, spleen, liver, skeletal muscle and kidney.

Its subcellular location is the golgi apparatus. The protein resides in the golgi stack membrane. It localises to the secreted. It carries out the reaction L-seryl-[protein] + UDP-N-acetyl-alpha-D-galactosamine = a 3-O-[N-acetyl-alpha-D-galactosaminyl]-L-seryl-[protein] + UDP + H(+). It catalyses the reaction L-threonyl-[protein] + UDP-N-acetyl-alpha-D-galactosamine = a 3-O-[N-acetyl-alpha-D-galactosaminyl]-L-threonyl-[protein] + UDP + H(+). The protein operates within protein modification; protein glycosylation. Functionally, catalyzes the initial reaction in O-linked oligosaccharide biosynthesis, the transfer of an N-acetyl-D-galactosamine residue to a serine or threonine residue on the protein receptor. Has a broad spectrum of substrates such as apomucin-, MUC5AC-, MUC1- and MUC2-derived peptides. This is Polypeptide N-acetylgalactosaminyltransferase 1 from Rattus norvegicus (Rat).